The sequence spans 308 residues: Hydroxyacylglutathione hydrolase, mitochondrial (308 aa).

The N-terminal 13 residues, 1–13 (MVVGRGLLGRRSL), are a transit peptide targeting the mitochondrion. Zn(2+) contacts are provided by His-102, His-104, Asp-106, and His-107. An N6-acetyllysine modification is found at Lys-116. Residues His-158 and Asp-182 each coordinate Zn(2+). Substrate is bound by residues 191-193 (KFY) and 221-223 (HEY). His-221 contributes to the Zn(2+) binding site. Lys-229 carries the N6-acetyllysine; alternate modification. N6-succinyllysine; alternate is present on Lys-229. 297 to 300 (RREK) serves as a coordination point for substrate.

This sequence belongs to the metallo-beta-lactamase superfamily. Glyoxalase II family. In terms of assembly, monomer. The cofactor is Zn(2+). As to expression, expressed in liver and kidney.

The protein resides in the mitochondrion matrix. It is found in the cytoplasm. It catalyses the reaction an S-(2-hydroxyacyl)glutathione + H2O = a 2-hydroxy carboxylate + glutathione + H(+). It carries out the reaction (R)-S-lactoylglutathione + H2O = (R)-lactate + glutathione + H(+). The protein operates within secondary metabolite metabolism; methylglyoxal degradation; (R)-lactate from methylglyoxal: step 2/2. Functionally, thiolesterase that catalyzes the hydrolysis of S-D-lactoyl-glutathione to form glutathione and D-lactic acid. This Homo sapiens (Human) protein is Hydroxyacylglutathione hydrolase, mitochondrial (HAGH).